Here is a 130-residue protein sequence, read N- to C-terminus: Putative protein ZNF815 (130 aa).

This is Putative protein ZNF815 (ZNF815P) from Homo sapiens (Human).